The following is a 497-amino-acid chain: Glutamate--tRNA ligase (497 aa).

The 'HIGH' region signature appears at 12 to 22 (PSPTGHLHIGN). Residues 259 to 263 (KLSKR) carry the 'KMSKS' region motif. An ATP-binding site is contributed by lysine 262.

The protein belongs to the class-I aminoacyl-tRNA synthetase family. Glutamate--tRNA ligase type 1 subfamily. As to quaternary structure, monomer.

The protein localises to the cytoplasm. The enzyme catalyses tRNA(Glu) + L-glutamate + ATP = L-glutamyl-tRNA(Glu) + AMP + diphosphate. Its function is as follows. Catalyzes the attachment of glutamate to tRNA(Glu) in a two-step reaction: glutamate is first activated by ATP to form Glu-AMP and then transferred to the acceptor end of tRNA(Glu). This Lacticaseibacillus casei (strain BL23) (Lactobacillus casei) protein is Glutamate--tRNA ligase.